The chain runs to 63 residues: Sarcotoxin-1A (63 aa).

The N-terminal stretch at 1-23 (MNFQNIFIFVALILAVFAGQSQA) is a signal peptide. Arg-62 bears the Arginine amide mark.

It belongs to the cecropin family.

The protein localises to the secreted. Its function is as follows. Sarcotoxins, which are potent bactericidal proteins, are produced in response to injury. They are cytotoxic to both Gram-positive and Gram-negative bacteria. The chain is Sarcotoxin-1A from Sarcophaga peregrina (Flesh fly).